A 452-amino-acid chain; its full sequence is Glycine receptor subunit alpha-2 (452 aa).

The N-terminal stretch at 1–27 (MYRQLVNILTALFAFFLGTNHFREAFC) is a signal peptide. Residues 28 to 256 (KDHDSRSGKH…KFHLERQMGY (229 aa)) lie on the Extracellular side of the membrane. The N-linked (GlcNAc...) asparagine glycan is linked to N72. R99 is a glycine binding site. Strychnine is bound at residue R99. N-linked (GlcNAc...) asparagine glycosylation is present at N103. S163 serves as a coordination point for glycine. An intrachain disulfide couples C172 to C186. Zn(2+) contacts are provided by E226 and E228. A disulfide bridge links C232 with C243. T238 is a binding site for glycine. A Zn(2+)-binding site is contributed by H249. Residues 257–278 (YLIQMYIPSLLIVILSWVSFWI) traverse the membrane as a helical segment. The Cytoplasmic portion of the chain corresponds to 279-283 (NMDAA). Residues 284–304 (PARVALGITTVLTMTTQSSGS) form a helical membrane-spanning segment. Residues 305–315 (RASLPKVSYVK) lie on the Extracellular side of the membrane. Residues 316–336 (AIDIWMAVCLLFVFAALLEYA) traverse the membrane as a helical segment. Residues 337-420 (AVNFVSRQHK…FVDRAKRIDT (84 aa)) lie on the Cytoplasmic side of the membrane. A helical transmembrane segment spans residues 421 to 441 (ISRAAFPLAFLIFNIFYWITY). Topologically, residues 442–452 (KIIRHEDVHKK) are extracellular.

It belongs to the ligand-gated ion channel (TC 1.A.9) family. Glycine receptor (TC 1.A.9.3) subfamily. GLRA2 sub-subfamily. In terms of assembly, interacts with GLRB. Heteropentamer composed of GLRA2 and GLRB; functional GLRB-GLRA2 heteropentamers contain four GLRA2 subunits and one GLRB subunit, although alternative subunit composition cannot be excluded. Homopentamer (in vitro). Both homopentamers and heteropentamers form functional ion channels, but their characteristics are subtly different. Detected in the retina inner plexiform layer (at protein level). Detected in neonate retina. Detected in brain. Detected in spinal cord, with higher levels in the dorsal horn.

It localises to the postsynaptic cell membrane. The protein localises to the synapse. Its subcellular location is the cell membrane. It is found in the cell projection. The catalysed reaction is chloride(in) = chloride(out). With respect to regulation, channel opening is triggered by extracellular glycine. Channel opening is also triggered by taurine and beta-alanine. Inhibited by strychnine. Inhibited by picrotoxin. Its function is as follows. Subunit of heteromeric glycine-gated chloride channels. Plays a role in synaptic plasticity. Contributes to the generation of inhibitory postsynaptic currents, and is involved in the down-regulation of neuronal excitability. Plays a role in cellular responses to ethanol. The polypeptide is Glycine receptor subunit alpha-2 (Mus musculus (Mouse)).